The primary structure comprises 239 residues: Probable inner membrane transporter protein TsaS (239 aa).

4 helical membrane-spanning segments follow: residues A65–G85, G128–L148, A160–A180, and A186–G206.

Belongs to the 4-toluene sulfonate uptake permease (TSUP) (TC 2.A.102) family. In terms of assembly, part of a two-component transport system composed of TsaT and TsaS.

It is found in the cell inner membrane. Functionally, involved in the uptake of p-toluenesulphonate (TSA). This is Probable inner membrane transporter protein TsaS (tsaS) from Comamonas testosteroni (Pseudomonas testosteroni).